The following is a 101-amino-acid chain: MAKTSMKAREAKRAQLVAKYAEKRAALKTIIASPASSDEDRWDAVLKLQALPRDSSAARQRNRCNQTGRPHGFLRKFGLSRIKLREATMRGEVPGLRKASW.

Belongs to the universal ribosomal protein uS14 family. As to quaternary structure, part of the 30S ribosomal subunit. Contacts proteins S3 and S10.

Binds 16S rRNA, required for the assembly of 30S particles and may also be responsible for determining the conformation of the 16S rRNA at the A site. In Shewanella baltica (strain OS155 / ATCC BAA-1091), this protein is Small ribosomal subunit protein uS14.